The sequence spans 607 residues: Hemagglutinin glycoprotein (607 aa).

Residues 1-37 (MLSYQDKVGAFYKDNARANSSKLSLVTEEQGGRRPPY) lie on the Intravirion side of the membrane. The chain crosses the membrane as a helical span at residues 38-58 (LLFVLLILLVGIMALLAITGV). The Virion surface portion of the chain corresponds to 59-607 (RFHQVSTSNM…IRFSCSRSKP (549 aa)). N-linked (GlcNAc...) asparagine; by host glycosylation is found at Asn149, Asn309, Asn391, Asn422, Asn456, and Asn587.

This sequence belongs to the paramyxoviruses hemagglutinin-neuraminidase family. Non-sialidase subfamily. As to quaternary structure, binds canine SLAMF1 at the cell surface.

It localises to the virion membrane. The protein resides in the host cell membrane. Attaches the virus to cell receptors and thereby initiating infection. Binding of H protein to the receptor induces a conformational change that allows the F protein to trigger virion/cell membranes fusion. The cellular receptor might be SLAM, and may explain the lymphotropism of the virus. This Canine distemper virus (strain A92-6) (CDV) protein is Hemagglutinin glycoprotein (H).